The following is a 218-amino-acid chain: uncharacterized protein (218 aa).

The Toprim domain occupies 111-193 (NSIYLVEGDF…ITKVIEIKAA (83 aa)).

This is an uncharacterized protein from Mycoplasma genitalium (strain ATCC 33530 / DSM 19775 / NCTC 10195 / G37) (Mycoplasmoides genitalium).